A 344-amino-acid chain; its full sequence is Uroporphyrinogen decarboxylase (344 aa).

Substrate-binding positions include 26 to 30 (RQAGR), D76, Y152, S207, and H323.

The protein belongs to the uroporphyrinogen decarboxylase family. As to quaternary structure, homodimer.

It localises to the cytoplasm. It carries out the reaction uroporphyrinogen III + 4 H(+) = coproporphyrinogen III + 4 CO2. Its pathway is porphyrin-containing compound metabolism; protoporphyrin-IX biosynthesis; coproporphyrinogen-III from 5-aminolevulinate: step 4/4. In terms of biological role, catalyzes the decarboxylation of four acetate groups of uroporphyrinogen-III to yield coproporphyrinogen-III. The polypeptide is Uroporphyrinogen decarboxylase (Hyphomonas neptunium (strain ATCC 15444)).